The chain runs to 283 residues: Pantothenate synthetase (283 aa).

Position 30 to 37 (30 to 37 (MGNLHDGH)) interacts with ATP. His37 functions as the Proton donor in the catalytic mechanism. Gln61 is a (R)-pantoate binding site. Gln61 is a beta-alanine binding site. 149 to 152 (GEKD) provides a ligand contact to ATP. Gln155 contributes to the (R)-pantoate binding site. 186 to 189 (LSSR) contacts ATP.

Belongs to the pantothenate synthetase family. As to quaternary structure, homodimer.

The protein localises to the cytoplasm. It carries out the reaction (R)-pantoate + beta-alanine + ATP = (R)-pantothenate + AMP + diphosphate + H(+). Its pathway is cofactor biosynthesis; (R)-pantothenate biosynthesis; (R)-pantothenate from (R)-pantoate and beta-alanine: step 1/1. Functionally, catalyzes the condensation of pantoate with beta-alanine in an ATP-dependent reaction via a pantoyl-adenylate intermediate. The protein is Pantothenate synthetase of Escherichia coli O17:K52:H18 (strain UMN026 / ExPEC).